Reading from the N-terminus, the 479-residue chain is Ribulose bisphosphate carboxylase large chain (479 aa).

Residues 1–2 constitute a propeptide that is removed on maturation; sequence MS. The residue at position 3 (Pro-3) is an N-acetylproline. Lys-14 is subject to N6,N6,N6-trimethyllysine. Positions 123 and 173 each coordinate substrate. The active-site Proton acceptor is the Lys-175. Substrate is bound at residue Lys-177. Lys-201, Asp-203, and Glu-204 together coordinate Mg(2+). Lys-201 bears the N6-carboxylysine mark. The active-site Proton acceptor is His-294. Residues Arg-295, His-327, and Ser-379 each coordinate substrate.

It belongs to the RuBisCO large chain family. Type I subfamily. Heterohexadecamer of 8 large chains and 8 small chains. Requires Mg(2+) as cofactor.

The protein localises to the plastid. The protein resides in the chloroplast. It carries out the reaction 2 (2R)-3-phosphoglycerate + 2 H(+) = D-ribulose 1,5-bisphosphate + CO2 + H2O. The catalysed reaction is D-ribulose 1,5-bisphosphate + O2 = 2-phosphoglycolate + (2R)-3-phosphoglycerate + 2 H(+). Its function is as follows. RuBisCO catalyzes two reactions: the carboxylation of D-ribulose 1,5-bisphosphate, the primary event in carbon dioxide fixation, as well as the oxidative fragmentation of the pentose substrate in the photorespiration process. Both reactions occur simultaneously and in competition at the same active site. This chain is Ribulose bisphosphate carboxylase large chain, found in Jasminum nudiflorum (Winter jasmine).